The primary structure comprises 122 residues: UPF0231 protein VP2494 (122 aa).

Belongs to the UPF0231 family.

This is UPF0231 protein VP2494 from Vibrio parahaemolyticus serotype O3:K6 (strain RIMD 2210633).